A 999-amino-acid chain; its full sequence is Probable hemoglobin and hemoglobin-haptoglobin-binding protein 4 (999 aa).

The first 24 residues, 1 to 24, serve as a signal peptide directing secretion; sequence MTNFRLNVLAYSVMLGLTASVAYA. Positions 25-52 are disordered; it reads EPTNQPTNQPTNQPTNQPTNQPTNQNSN. 6 consecutive repeat copies span residues 26–29, 30–33, 34–37, 38–41, 42–45, and 46–49. A 6 X 4 AA tandem repeats of P-T-N-Q region spans residues 26 to 49; sequence PTNQPTNQPTNQPTNQPTNQPTNQ. Positions 26–50 are enriched in low complexity; sequence PTNQPTNQPTNQPTNQPTNQPTNQN. The TonB box signature appears at 58–65; the sequence is EQINVLGS. One can recognise a TBDR plug domain in the interval 68 to 195; it reads NNDNTPPKIA…LGGAVLFETK (128 aa). Residues 203–999 form the TBDR beta-barrel domain; sequence EKDWHIGYKA…NYKLSAEITF (797 aa). The short motif at 982-999 is the TonB C-terminal box element; the sequence is NRFYSPGRNYKLSAEITF.

It belongs to the TonB-dependent receptor family. Hemoglobin/haptoglobin binding protein subfamily.

Its subcellular location is the cell outer membrane. Acts as a receptor for hemoglobin or the hemoglobin/haptoglobin complex of the human host and is required for heme uptake. The protein is Probable hemoglobin and hemoglobin-haptoglobin-binding protein 4 of Haemophilus influenzae (strain ATCC 51907 / DSM 11121 / KW20 / Rd).